Consider the following 331-residue polypeptide: Tetraacyldisaccharide 4'-kinase (331 aa).

58-65 (TVGGSGKT) contacts ATP.

Belongs to the LpxK family.

The catalysed reaction is a lipid A disaccharide + ATP = a lipid IVA + ADP + H(+). Its pathway is glycolipid biosynthesis; lipid IV(A) biosynthesis; lipid IV(A) from (3R)-3-hydroxytetradecanoyl-[acyl-carrier-protein] and UDP-N-acetyl-alpha-D-glucosamine: step 6/6. In terms of biological role, transfers the gamma-phosphate of ATP to the 4'-position of a tetraacyldisaccharide 1-phosphate intermediate (termed DS-1-P) to form tetraacyldisaccharide 1,4'-bis-phosphate (lipid IVA). This chain is Tetraacyldisaccharide 4'-kinase, found in Shewanella denitrificans (strain OS217 / ATCC BAA-1090 / DSM 15013).